The primary structure comprises 21 residues: Short neurotoxin E1 (21 aa).

The disordered stretch occupies residues 1–21 (MICYNHQSSEPPTTXTCSEGQ).

Contains 4 disulfide bonds. As to expression, expressed by the venom gland.

Its subcellular location is the secreted. Binds to muscle nicotinic acetylcholine receptor (nAChR) and inhibit acetylcholine from binding to the receptor, thereby impairing neuromuscular transmission. This chain is Short neurotoxin E1, found in Micrurus pyrrhocryptus (Coral snake).